Consider the following 120-residue polypeptide: MARFTSIVLVLSACFVSSRAQFGFFDQMFGNQGHQQHQEPQNVRSDSSWYQAQYEGAQCTHYLCPGTLSCVHFPHHCPCAWESVEDKAELGDGIAICGSKGGWKEGEFAKKVELARKGVL.

The first 20 residues, 1 to 20 (MARFTSIVLVLSACFVSSRA), serve as a signal peptide directing secretion.

Belongs to the LCL2 family.

Its function is as follows. Probable component of the endoplasmic reticulum-associated degradation (ERAD) pathway. In Phaeosphaeria nodorum (strain SN15 / ATCC MYA-4574 / FGSC 10173) (Glume blotch fungus), this protein is Long chronological lifespan protein 2 (LCL2).